We begin with the raw amino-acid sequence, 178 residues long: ATP synthase subunit delta (178 aa).

Belongs to the ATPase delta chain family. As to quaternary structure, F-type ATPases have 2 components, F(1) - the catalytic core - and F(0) - the membrane proton channel. F(1) has five subunits: alpha(3), beta(3), gamma(1), delta(1), epsilon(1). F(0) has three main subunits: a(1), b(2) and c(10-14). The alpha and beta chains form an alternating ring which encloses part of the gamma chain. F(1) is attached to F(0) by a central stalk formed by the gamma and epsilon chains, while a peripheral stalk is formed by the delta and b chains.

The protein localises to the cell inner membrane. Functionally, f(1)F(0) ATP synthase produces ATP from ADP in the presence of a proton or sodium gradient. F-type ATPases consist of two structural domains, F(1) containing the extramembraneous catalytic core and F(0) containing the membrane proton channel, linked together by a central stalk and a peripheral stalk. During catalysis, ATP synthesis in the catalytic domain of F(1) is coupled via a rotary mechanism of the central stalk subunits to proton translocation. This protein is part of the stalk that links CF(0) to CF(1). It either transmits conformational changes from CF(0) to CF(1) or is implicated in proton conduction. The polypeptide is ATP synthase subunit delta (Methylobacillus flagellatus (strain ATCC 51484 / DSM 6875 / VKM B-1610 / KT)).